A 353-amino-acid chain; its full sequence is uncharacterized protein (353 aa).

Positions 1–30 (MHLRHLFSSRLRGSLLLGSLLVVSSFSTQA) are cleaved as a signal peptide.

As to quaternary structure, monomer.

This is an uncharacterized protein from Escherichia coli (strain K12).